A 272-amino-acid chain; its full sequence is Endogenous Bornavirus-like nucleoprotein 2 (272 aa).

The interval 48–70 is disordered; sequence MSHLRKDSQPSSPGDDAMDRSGL.

Its function is as follows. May act as an RNA-binding protein. The C-terminal region is highly homologous to the bornavirus nucleocapsid N protein that binds viral RNA and oligomerizes. The viral protein also possesses a nuclear import and a nuclear export signal. These 2 signals seem absent in EBLN-2 supporting an unrelated function in Human. The polypeptide is Endogenous Bornavirus-like nucleoprotein 2 (EBLN2) (Homo sapiens (Human)).